A 290-amino-acid polypeptide reads, in one-letter code: 4-hydroxybenzoate octaprenyltransferase (290 aa).

6 helical membrane-spanning segments follow: residues 33-53 (LWAL…AVFV), 99-119 (LFVI…VKTI), 141-161 (LPQV…FCAV), 213-233 (LIIG…GWLN), 234-254 (GLGA…IWQQ), and 268-288 (AFLN…LSYL).

Belongs to the UbiA prenyltransferase family. Mg(2+) is required as a cofactor.

Its subcellular location is the cell inner membrane. The catalysed reaction is all-trans-octaprenyl diphosphate + 4-hydroxybenzoate = 4-hydroxy-3-(all-trans-octaprenyl)benzoate + diphosphate. Its pathway is cofactor biosynthesis; ubiquinone biosynthesis. In terms of biological role, catalyzes the prenylation of para-hydroxybenzoate (PHB) with an all-trans polyprenyl group. Mediates the second step in the final reaction sequence of ubiquinone-8 (UQ-8) biosynthesis, which is the condensation of the polyisoprenoid side chain with PHB, generating the first membrane-bound Q intermediate 3-octaprenyl-4-hydroxybenzoate. The sequence is that of 4-hydroxybenzoate octaprenyltransferase from Cronobacter sakazakii (strain ATCC BAA-894) (Enterobacter sakazakii).